Consider the following 315-residue polypeptide: DNA-directed RNA polymerase subunit alpha (315 aa).

Residues 1 to 228 (MIEIEKPKVD…EHLNLFIDLT (228 aa)) form an alpha N-terminal domain (alpha-NTD) region. The interval 245 to 315 (KEKVLEMTIE…LGLGLKPSEE (71 aa)) is alpha C-terminal domain (alpha-CTD).

The protein belongs to the RNA polymerase alpha chain family. In terms of assembly, homodimer. The RNAP catalytic core consists of 2 alpha, 1 beta, 1 beta' and 1 omega subunit. When a sigma factor is associated with the core the holoenzyme is formed, which can initiate transcription.

The catalysed reaction is RNA(n) + a ribonucleoside 5'-triphosphate = RNA(n+1) + diphosphate. Functionally, DNA-dependent RNA polymerase catalyzes the transcription of DNA into RNA using the four ribonucleoside triphosphates as substrates. The sequence is that of DNA-directed RNA polymerase subunit alpha from Clostridioides difficile (strain 630) (Peptoclostridium difficile).